The following is a 336-amino-acid chain: UPF0324 membrane protein SP_0034 (336 aa).

8 helical membrane passes run 65–84, 91–113, 118–140, 153–175, 211–233, 249–271, 286–305, and 312–334; these read LLQY…QVFA, PVIL…FFAL, ATLV…APVI, VIFF…LHLS, SATI…LSYW, VFPL…TSLG, FLIV…VAMV, and ILLG…TLIG.

The protein belongs to the UPF0324 family.

The protein localises to the cell membrane. The polypeptide is UPF0324 membrane protein SP_0034 (Streptococcus pneumoniae serotype 4 (strain ATCC BAA-334 / TIGR4)).